The following is a 308-amino-acid chain: Isoaspartyl peptidase/L-asparaginase (308 aa).

At methionine 1 the chain carries N-acetylmethionine. Threonine 168 serves as the catalytic Nucleophile. Residues 196–199 and 219–222 each bind substrate; these read RVGD and TGHG.

This sequence belongs to the Ntn-hydrolase family. In terms of assembly, heterodimer of an alpha and beta chain produced by autocleavage. This heterodimer may then dimerize in turn, giving rise to a heterotetramer. In terms of processing, cleaved into an alpha and beta chain by autocatalysis; this activates the enzyme. The N-terminal residue of the beta subunit is responsible for the nucleophile hydrolase activity.

Its subcellular location is the cytoplasm. It carries out the reaction L-asparagine + H2O = L-aspartate + NH4(+). The enzyme catalyses Cleavage of a beta-linked Asp residue from the N-terminus of a polypeptide.. Functionally, has both L-asparaginase and beta-aspartyl peptidase activity. May be involved in the production of L-aspartate, which can act as an excitatory neurotransmitter in some brain regions. Is highly active with L-Asp beta-methyl ester. Besides, has catalytic activity toward beta-aspartyl dipeptides and their methyl esters, including beta-L-Asp-L-Phe, beta-L-Asp-L-Phe methyl ester (aspartame), beta-L-Asp-L-Ala, beta-L-Asp-L-Leu and beta-L-Asp-L-Lys. Does not have aspartylglucosaminidase activity and is inactive toward GlcNAc-L-Asn. Likewise, has no activity toward glutamine. The polypeptide is Isoaspartyl peptidase/L-asparaginase (ASRGL1) (Macaca fascicularis (Crab-eating macaque)).